The sequence spans 258 residues: Global transcriptional regulator CodY (258 aa).

A GAF domain region spans residues 1–156; that stretch reads MSSLLSKTRR…SATIVGMEML (156 aa). The segment at residues 204 to 223 is a DNA-binding region (H-T-H motif); the sequence is ASKIADKVGITRSVIVNALR.

The protein belongs to the CodY family.

The protein localises to the cytoplasm. DNA-binding global transcriptional regulator which is involved in the adaptive response to starvation and acts by directly or indirectly controlling the expression of numerous genes in response to nutrient availability. During rapid exponential growth, CodY is highly active and represses genes whose products allow adaptation to nutrient depletion. The chain is Global transcriptional regulator CodY from Clostridium botulinum (strain Eklund 17B / Type B).